Consider the following 116-residue polypeptide: MSEKLESQTCTPCRGGIPPLERAEAEALLVETPGWTLADDAGRLERSFTFRNFAQALEFVSGVGRLAEEQGHHPEISFGWGHATVSWRTKKIKGLHRNDFVMAAKTSELAAGMTQG.

Belongs to the pterin-4-alpha-carbinolamine dehydratase family.

It carries out the reaction (4aS,6R)-4a-hydroxy-L-erythro-5,6,7,8-tetrahydrobiopterin = (6R)-L-erythro-6,7-dihydrobiopterin + H2O. This Cupriavidus pinatubonensis (strain JMP 134 / LMG 1197) (Cupriavidus necator (strain JMP 134)) protein is Putative pterin-4-alpha-carbinolamine dehydratase 1.